The chain runs to 1036 residues: Isoleucine--tRNA ligase (1036 aa).

The short motif at 48-58 (PTANGKPHVGH) is the 'HIGH' region element. The 'KMSKS' region signature appears at 590–594 (KMSKS). K593 contributes to the ATP binding site.

This sequence belongs to the class-I aminoacyl-tRNA synthetase family. IleS type 2 subfamily. As to quaternary structure, monomer. The cofactor is Zn(2+).

Its subcellular location is the cytoplasm. The catalysed reaction is tRNA(Ile) + L-isoleucine + ATP = L-isoleucyl-tRNA(Ile) + AMP + diphosphate. Its function is as follows. Catalyzes the attachment of isoleucine to tRNA(Ile). As IleRS can inadvertently accommodate and process structurally similar amino acids such as valine, to avoid such errors it has two additional distinct tRNA(Ile)-dependent editing activities. One activity is designated as 'pretransfer' editing and involves the hydrolysis of activated Val-AMP. The other activity is designated 'posttransfer' editing and involves deacylation of mischarged Val-tRNA(Ile). The polypeptide is Isoleucine--tRNA ligase (Clostridium tetani (strain Massachusetts / E88)).